We begin with the raw amino-acid sequence, 88 residues long: Small ribosomal subunit protein uS15 (88 aa).

The protein belongs to the universal ribosomal protein uS15 family. As to quaternary structure, part of the 30S ribosomal subunit. Forms a bridge to the 50S subunit in the 70S ribosome, contacting the 23S rRNA.

In terms of biological role, one of the primary rRNA binding proteins, it binds directly to 16S rRNA where it helps nucleate assembly of the platform of the 30S subunit by binding and bridging several RNA helices of the 16S rRNA. Forms an intersubunit bridge (bridge B4) with the 23S rRNA of the 50S subunit in the ribosome. This Psychrobacter cryohalolentis (strain ATCC BAA-1226 / DSM 17306 / VKM B-2378 / K5) protein is Small ribosomal subunit protein uS15.